We begin with the raw amino-acid sequence, 138 residues long: Nucleoside diphosphate kinase (138 aa).

Positions 11, 59, 87, 93, 104, and 114 each coordinate ATP. The Pros-phosphohistidine intermediate role is filled by histidine 117.

The protein belongs to the NDK family. Mg(2+) serves as cofactor.

Its subcellular location is the cytoplasm. It carries out the reaction a 2'-deoxyribonucleoside 5'-diphosphate + ATP = a 2'-deoxyribonucleoside 5'-triphosphate + ADP. It catalyses the reaction a ribonucleoside 5'-diphosphate + ATP = a ribonucleoside 5'-triphosphate + ADP. Its function is as follows. Major role in the synthesis of nucleoside triphosphates other than ATP. The ATP gamma phosphate is transferred to the NDP beta phosphate via a ping-pong mechanism, using a phosphorylated active-site intermediate. The chain is Nucleoside diphosphate kinase from Saccharolobus solfataricus (strain ATCC 35092 / DSM 1617 / JCM 11322 / P2) (Sulfolobus solfataricus).